A 433-amino-acid chain; its full sequence is Phosphoribosylamine--glycine ligase (433 aa).

In terms of domain architecture, ATP-grasp spans 111-317; it reads EFMARNNIKG…FVDICEAIVD (207 aa). ATP is bound at residue 138–194; sequence EDNPDVVVKPAGLTGGKGVKVMGEHMHTLEEAREYVKSVLEHDRVVIEERLKGEEVT. 3 residues coordinate Mg(2+): Gln275, Glu287, and Asn289. Mn(2+)-binding residues include Gln275, Glu287, and Asn289.

Belongs to the GARS family. It depends on Mg(2+) as a cofactor. The cofactor is Mn(2+).

It catalyses the reaction 5-phospho-beta-D-ribosylamine + glycine + ATP = N(1)-(5-phospho-beta-D-ribosyl)glycinamide + ADP + phosphate + H(+). It functions in the pathway purine metabolism; IMP biosynthesis via de novo pathway; N(1)-(5-phospho-D-ribosyl)glycinamide from 5-phospho-alpha-D-ribose 1-diphosphate: step 2/2. The polypeptide is Phosphoribosylamine--glycine ligase (Methanocella arvoryzae (strain DSM 22066 / NBRC 105507 / MRE50)).